Reading from the N-terminus, the 331-residue chain is Undecaprenyl-phosphate 4-deoxy-4-formamido-L-arabinose transferase (331 aa).

The next 2 membrane-spanning stretches (helical) occupy residues 236 to 256 (LSIV…FLIL) and 270 to 290 (VFPL…GLGL).

This sequence belongs to the glycosyltransferase 2 family.

The protein localises to the cell inner membrane. It catalyses the reaction UDP-4-deoxy-4-formamido-beta-L-arabinose + di-trans,octa-cis-undecaprenyl phosphate = 4-deoxy-4-formamido-alpha-L-arabinopyranosyl di-trans,octa-cis-undecaprenyl phosphate + UDP. It participates in glycolipid biosynthesis; 4-amino-4-deoxy-alpha-L-arabinose undecaprenyl phosphate biosynthesis; 4-amino-4-deoxy-alpha-L-arabinose undecaprenyl phosphate from UDP-4-deoxy-4-formamido-beta-L-arabinose and undecaprenyl phosphate: step 1/2. The protein operates within bacterial outer membrane biogenesis; lipopolysaccharide biosynthesis. In terms of biological role, catalyzes the transfer of 4-deoxy-4-formamido-L-arabinose from UDP to undecaprenyl phosphate. The modified arabinose is attached to lipid A and is required for resistance to polymyxin and cationic antimicrobial peptides. The protein is Undecaprenyl-phosphate 4-deoxy-4-formamido-L-arabinose transferase of Shewanella sediminis (strain HAW-EB3).